Reading from the N-terminus, the 453-residue chain is Kynureninase (453 aa).

Residues L114, T115, 142 to 145, D232, H235, and Y257 contribute to the pyridoxal 5'-phosphate site; that span reads FPSD. K258 is modified (N6-(pyridoxal phosphate)lysine). W286 is a pyridoxal 5'-phosphate binding site.

Belongs to the kynureninase family. In terms of assembly, homodimer. Pyridoxal 5'-phosphate serves as cofactor.

Its subcellular location is the cytoplasm. It catalyses the reaction L-kynurenine + H2O = anthranilate + L-alanine + H(+). The enzyme catalyses 3-hydroxy-L-kynurenine + H2O = 3-hydroxyanthranilate + L-alanine + H(+). Its pathway is amino-acid degradation; L-kynurenine degradation; L-alanine and anthranilate from L-kynurenine: step 1/1. The protein operates within cofactor biosynthesis; NAD(+) biosynthesis; quinolinate from L-kynurenine: step 2/3. Functionally, catalyzes the cleavage of L-kynurenine (L-Kyn) and L-3-hydroxykynurenine (L-3OHKyn) into anthranilic acid (AA) and 3-hydroxyanthranilic acid (3-OHAA), respectively. In Cryptococcus neoformans var. neoformans serotype D (strain B-3501A) (Filobasidiella neoformans), this protein is Kynureninase.